We begin with the raw amino-acid sequence, 282 residues long: 1D-myo-inositol 2-acetamido-2-deoxy-alpha-D-glucopyranoside deacetylase (282 aa).

Residues H6, D9, and H141 each contribute to the Zn(2+) site.

It belongs to the MshB deacetylase family. Requires Zn(2+) as cofactor.

The catalysed reaction is 1D-myo-inositol 2-acetamido-2-deoxy-alpha-D-glucopyranoside + H2O = 1D-myo-inositol 2-amino-2-deoxy-alpha-D-glucopyranoside + acetate. In terms of biological role, catalyzes the deacetylation of 1D-myo-inositol 2-acetamido-2-deoxy-alpha-D-glucopyranoside (GlcNAc-Ins) in the mycothiol biosynthesis pathway. The protein is 1D-myo-inositol 2-acetamido-2-deoxy-alpha-D-glucopyranoside deacetylase of Nocardiopsis dassonvillei (strain ATCC 23218 / DSM 43111 / CIP 107115 / JCM 7437 / KCTC 9190 / NBRC 14626 / NCTC 10488 / NRRL B-5397 / IMRU 509) (Actinomadura dassonvillei).